Here is an 89-residue protein sequence, read N- to C-terminus: Small ribosomal subunit protein uS15 (89 aa).

This sequence belongs to the universal ribosomal protein uS15 family. As to quaternary structure, part of the 30S ribosomal subunit. Forms a bridge to the 50S subunit in the 70S ribosome, contacting the 23S rRNA.

Its function is as follows. One of the primary rRNA binding proteins, it binds directly to 16S rRNA where it helps nucleate assembly of the platform of the 30S subunit by binding and bridging several RNA helices of the 16S rRNA. Forms an intersubunit bridge (bridge B4) with the 23S rRNA of the 50S subunit in the ribosome. The polypeptide is Small ribosomal subunit protein uS15 (Streptococcus mutans serotype c (strain ATCC 700610 / UA159)).